Reading from the N-terminus, the 449-residue chain is Galactosyl transferase CpsE (449 aa).

A run of 5 helical transmembrane segments spans residues 5 to 22 (VVVY…TPNF), 27 to 46 (DLLF…DFYR), 59 to 78 (MVLK…FFIF), 88 to 107 (SFFT…NSFL), and 258 to 280 (FLDI…FLVP).

The protein belongs to the bacterial sugar transferase family.

The protein resides in the cell membrane. Functionally, galactosyl transferase is essential for the assembly of the group B streptococci (GBS) type III capsular polysaccharide. May be involved in the formation of either or both galactosidic bonds by catalyzing the addition of galactose to an oligosaccharide precursor or to a lipid intermediate. Type III capsular polysaccharide consists of a linear backbone with short side chains ending in residues of N-acetylneuraminic acid or sialic acid. The presence of sialic acid on the surface of the organism inhibits activation of the alternative pathway of complement and is thought to be an important element in the virulence function of the capsule. This is Galactosyl transferase CpsE (cpsE) from Streptococcus agalactiae serotype III (strain NEM316).